The sequence spans 182 residues: NADH-quinone oxidoreductase subunit B 1 (182 aa).

[4Fe-4S] cluster-binding residues include C47, C48, C113, and C142.

The protein belongs to the complex I 20 kDa subunit family. In terms of assembly, NDH-1 is composed of 14 different subunits. Subunits NuoB, C, D, E, F, and G constitute the peripheral sector of the complex. [4Fe-4S] cluster serves as cofactor.

It is found in the cell inner membrane. The enzyme catalyses a quinone + NADH + 5 H(+)(in) = a quinol + NAD(+) + 4 H(+)(out). Functionally, NDH-1 shuttles electrons from NADH, via FMN and iron-sulfur (Fe-S) centers, to quinones in the respiratory chain. Couples the redox reaction to proton translocation (for every two electrons transferred, four hydrogen ions are translocated across the cytoplasmic membrane), and thus conserves the redox energy in a proton gradient. The protein is NADH-quinone oxidoreductase subunit B 1 of Anaeromyxobacter dehalogenans (strain 2CP-C).